The primary structure comprises 612 residues: U-box domain-containing protein 11 (612 aa).

Positions 127–196 form a coiled coil; the sequence is DEVGEQVELA…LHFGEEEEKQ (70 aa). The region spanning 240–314 is the U-box domain; it reads TIPVDFLCPV…SRWCAEHNIE (75 aa). ARM repeat units lie at residues 363–402, 404–443, 445–484, 486–526, and 528–567; these read TDNR…NLSI, ENNK…SLSL, DENK…NLCI, HGNK…VLAN, and QDAK…SLCK.

It carries out the reaction S-ubiquitinyl-[E2 ubiquitin-conjugating enzyme]-L-cysteine + [acceptor protein]-L-lysine = [E2 ubiquitin-conjugating enzyme]-L-cysteine + N(6)-ubiquitinyl-[acceptor protein]-L-lysine.. It functions in the pathway protein modification; protein ubiquitination. In terms of biological role, functions as an E3 ubiquitin ligase. In Arabidopsis thaliana (Mouse-ear cress), this protein is U-box domain-containing protein 11 (PUB11).